A 298-amino-acid polypeptide reads, in one-letter code: Protoheme IX farnesyltransferase (298 aa).

A run of 9 helical transmembrane segments spans residues 26-46, 52-72, 93-113, 120-140, 148-168, 174-194, 219-239, 241-261, and 278-298; these read VVSL…PGAV, LLGT…NCLV, VSVP…LFIL, LTMW…TVIL, IVIG…AITG, ALLL…ALAL, LHVL…YLTQ, SGLI…YYAI, and YSII…YFYF.

Belongs to the UbiA prenyltransferase family. Protoheme IX farnesyltransferase subfamily.

It localises to the cell inner membrane. It catalyses the reaction heme b + (2E,6E)-farnesyl diphosphate + H2O = Fe(II)-heme o + diphosphate. Its pathway is porphyrin-containing compound metabolism; heme O biosynthesis; heme O from protoheme: step 1/1. Its function is as follows. Converts heme B (protoheme IX) to heme O by substitution of the vinyl group on carbon 2 of heme B porphyrin ring with a hydroxyethyl farnesyl side group. In Nitrosomonas eutropha (strain DSM 101675 / C91 / Nm57), this protein is Protoheme IX farnesyltransferase.